The sequence spans 28 residues: U1-poneritoxin-Da4a (28 aa).

A28 carries the alanine amide modification.

As to expression, expressed by the venom gland.

The protein localises to the secreted. Functionally, shows a broad spectrum of activity against both Gram-positive and Gram-negative bacteria. Also has antimicrobial activity against S.cerevisiae. Has insecticidal and non-hemolytic activity. In Dinoponera australis (Giant neotropical hunting ant), this protein is U1-poneritoxin-Da4a.